The primary structure comprises 714 residues: Phosphate acetyltransferase (714 aa).

Residues 391–714 form a phosphate acetyltransferase region; the sequence is AFRYQLTELA…LTAIQSAQQQ (324 aa).

It in the N-terminal section; belongs to the CobB/CobQ family. In the C-terminal section; belongs to the phosphate acetyltransferase and butyryltransferase family. Homohexamer.

Its subcellular location is the cytoplasm. The catalysed reaction is acetyl-CoA + phosphate = acetyl phosphate + CoA. Its pathway is metabolic intermediate biosynthesis; acetyl-CoA biosynthesis; acetyl-CoA from acetate: step 2/2. With respect to regulation, inhibited by NADH and ATP. Pyruvate and PEP act as activators of the acetyl phosphate forming reaction while inhibiting the formation of acetyl-CoA. In terms of biological role, involved in acetate metabolism. Catalyzes the reversible interconversion of acetyl-CoA and acetyl phosphate. The direction of the overall reaction changes depending on growth conditions. On minimal medium acetyl-CoA is generated. In rich medium acetyl-CoA is converted to acetate and allowing the cell to dump the excess of acetylation potential in exchange for energy in the form of ATP. The main pathway for acetate production during exponential phase. In Escherichia coli (strain K12), this protein is Phosphate acetyltransferase (pta).